Consider the following 399-residue polypeptide: Adenylate cyclase (399 aa).

The span at 1–10 shows a compositional bias: polar residues; sequence MTVGDTTSGS. The interval 1–35 is disordered; that stretch reads MTVGDTTSGSGEEPAADSSVHATPHHEVDHTVEPT. Residues 24 to 33 show a composition bias toward basic and acidic residues; it reads PHHEVDHTVE. Residues 198–307 enclose the Guanylate cyclase domain; that stretch reads RVRFADLVGF…TTVNLASRLT (110 aa). Mg(2+) contacts are provided by Asp203 and Asp247.

This sequence belongs to the adenylyl cyclase class-3 family. Mg(2+) serves as cofactor.

It carries out the reaction ATP = 3',5'-cyclic AMP + diphosphate. The chain is Adenylate cyclase (cya) from Streptomyces griseus.